A 391-amino-acid chain; its full sequence is Suppressor APC domain-containing protein 2 (391 aa).

Residues 1–20 (MAVAAMAERGRLSHAAPAPS) are disordered. At Thr218 the chain carries Phosphothreonine. Residues 226–277 (SLLKQMKELDQEQEVLLQGLEMMARGRDWYQQQLQRVQERQRRLSQSRAAAD) are a coiled coil. Ser283 is modified (phosphoserine). Positions 340–381 (LKEQNRLLTQEVTDKSERITQLEQEKSALIKQLFEARALSQQ) form a coiled coil.

As to quaternary structure, interacts with a spindle orientation complex at least composed of GNAI1, GPSM2 and NUMA1. Interacts with GPSM2 (via TPR motifs); this interaction is required to prevent GPSM2 anchoring at the mitotic apical cortex and is inhibited in presence of NUMA1 in a dose dependent manner. Interacts with PARD3. As to expression, expressed in the retina. Expressed in retinal progenitor cells and newly differentiated neurons but not in mature retinal cells (at protein level).

The protein localises to the cytoplasm. The protein resides in the nucleus. It localises to the cell cortex. It is found in the apical cell membrane. Its subcellular location is the cell junction. The protein localises to the tight junction. Plays a role in planar mitotic spindle orientation in retinal progenitor cells (RPCs) and promotes the production of symmetric terminal divisions. Negatively regulates the mitotic apical cortex localization of GPSM2. Involved also in positive regulation of cell proliferation and tumor cell growth. This Mus musculus (Mouse) protein is Suppressor APC domain-containing protein 2.